A 252-amino-acid polypeptide reads, in one-letter code: Imidazole glycerol phosphate synthase subunit HisF (252 aa).

Active-site residues include Asp11 and Asp130.

The protein belongs to the HisA/HisF family. Heterodimer of HisH and HisF.

Its subcellular location is the cytoplasm. The enzyme catalyses 5-[(5-phospho-1-deoxy-D-ribulos-1-ylimino)methylamino]-1-(5-phospho-beta-D-ribosyl)imidazole-4-carboxamide + L-glutamine = D-erythro-1-(imidazol-4-yl)glycerol 3-phosphate + 5-amino-1-(5-phospho-beta-D-ribosyl)imidazole-4-carboxamide + L-glutamate + H(+). It participates in amino-acid biosynthesis; L-histidine biosynthesis; L-histidine from 5-phospho-alpha-D-ribose 1-diphosphate: step 5/9. IGPS catalyzes the conversion of PRFAR and glutamine to IGP, AICAR and glutamate. The HisF subunit catalyzes the cyclization activity that produces IGP and AICAR from PRFAR using the ammonia provided by the HisH subunit. In Bacillus velezensis (strain DSM 23117 / BGSC 10A6 / LMG 26770 / FZB42) (Bacillus amyloliquefaciens subsp. plantarum), this protein is Imidazole glycerol phosphate synthase subunit HisF.